The chain runs to 400 residues: MIIKPRVRGFICVTTHPVGCEANVKEQIDYVTSHGPIANGPKKVLVIGASTGYGLAARISAAFGSGADTLGVFFERAGSETKPGTAGWYNSAAFEKFATEKGLYARSINGDAFSDKVKQVTIDTIKQDLGKVDLVVYSLAAPRRTHPKTGETISSTLKPVGKAVTFRGLDTDKEVIREVSLEPATQEEIDGTVAVMGGEDWQMWIDALADAGVLADGAKTTAFTYLGEQITHDIYWNGSIGEAKKDLDKKVLSIRDKLAAHGGDARVSVLKAVVTQASSAIPMMPLYLSLLFKVMKEKGTHEGCIEQVYGLLKDSLYGATPHVDEEGRLRADYKELDPQVQNQVVAMWDKVTNENLYEMTDFAGYKTEFLRLFGFEIAGVDYDADVNPDVKIPGIIDTTV.

Residues 48–53, 74–75, 111–112, and 139–140 each bind NAD(+); these read GASTGY, FE, DA, and LA. Tyr225 provides a ligand contact to substrate. The Proton donor role is filled by Tyr235. Residues Lys244 and 273-275 contribute to the NAD(+) site; that span reads VVT.

The protein belongs to the TER reductase family. Monomer.

It catalyses the reaction a 2,3-saturated acyl-[ACP] + NAD(+) = a (2E)-enoyl-[ACP] + NADH + H(+). It functions in the pathway lipid metabolism; fatty acid biosynthesis. Functionally, involved in the final reduction of the elongation cycle of fatty acid synthesis (FAS II). Catalyzes the reduction of a carbon-carbon double bond in an enoyl moiety that is covalently linked to an acyl carrier protein (ACP). The chain is Enoyl-[acyl-carrier-protein] reductase [NADH] from Burkholderia cenocepacia (strain ATCC BAA-245 / DSM 16553 / LMG 16656 / NCTC 13227 / J2315 / CF5610) (Burkholderia cepacia (strain J2315)).